The following is a 990-amino-acid chain: TonB-dependent receptor P26 (990 aa).

The TonB box signature appears at 86–93 (DEVVVIGY). Residues 97-213 (RKSDLTGSVS…ANGVVLVTTK (117 aa)) form the TBDR plug domain. The 771-residue stretch at 220 to 990 (SSKPEVSANI…TITLGLNVTF (771 aa)) folds into the TBDR beta-barrel domain. Residues 878–902 (TPENPTSDIPRAGGDSVTGTPPNSA) are disordered. Positions 974 to 990 (GSYPNPRTITLGLNVTF) match the TonB C-terminal box motif.

It belongs to the TonB-dependent receptor family.

The protein resides in the cell outer membrane. In terms of biological role, tonB-dependent receptor probably involved in ulvan degradation. Ulvan is the main polysaccharide component of the Ulvales (green seaweed) cell wall. It is composed of disaccharide building blocks comprising 3-sulfated rhamnose (Rha3S) linked to D-glucuronic acid (GlcA), L-iduronic acid (IduA), or D-xylose (Xyl). The TonB-dependent receptor may mediate transport of ulvan oligosaccharides from the surface of the outer membrane to the periplasm for subsequent degradation. In Formosa agariphila (strain DSM 15362 / KCTC 12365 / LMG 23005 / KMM 3901 / M-2Alg 35-1), this protein is TonB-dependent receptor P26.